The sequence spans 922 residues: DNA gyrase subunit A (922 aa).

The segment covering 1–14 (MTETPTDGGSTPPS) has biased composition (low complexity). The segment at 1–24 (MTETPTDGGSTPPSDGGGPGGRIE) is disordered. One can recognise a Topo IIA-type catalytic domain in the interval 49 to 518 (LPDVRDGLKP…ADGDLSMEDL (470 aa)). The active-site O-(5'-phospho-DNA)-tyrosine intermediate is the tyrosine 137. The short motif at 545–551 (QRRGGKG) is the GyrA-box element. The tract at residues 861 to 922 (EANGDDELDE…TEPDPGESDG (62 aa)) is disordered. Acidic residues-rich tracts occupy residues 863–890 (NGDD…DESA) and 912–922 (DTEPDPGESDG).

It belongs to the type II topoisomerase GyrA/ParC subunit family. Heterotetramer, composed of two GyrA and two GyrB chains. In the heterotetramer, GyrA contains the active site tyrosine that forms a transient covalent intermediate with DNA, while GyrB binds cofactors and catalyzes ATP hydrolysis.

The protein resides in the cytoplasm. The catalysed reaction is ATP-dependent breakage, passage and rejoining of double-stranded DNA.. Functionally, a type II topoisomerase that negatively supercoils closed circular double-stranded (ds) DNA in an ATP-dependent manner to modulate DNA topology and maintain chromosomes in an underwound state. Negative supercoiling favors strand separation, and DNA replication, transcription, recombination and repair, all of which involve strand separation. Also able to catalyze the interconversion of other topological isomers of dsDNA rings, including catenanes and knotted rings. Type II topoisomerases break and join 2 DNA strands simultaneously in an ATP-dependent manner. This is DNA gyrase subunit A from Nocardioides sp. (strain ATCC BAA-499 / JS614).